The following is a 505-amino-acid chain: Putative ribose/galactose/methyl galactoside import ATP-binding protein 1 (505 aa).

ABC transporter domains follow at residues 10–245 and 256–501; these read LRLE…VGRS and RPTD…SGYG. Residue 42–49 coordinates ATP; it reads GENGAGKS.

It belongs to the ABC transporter superfamily. Carbohydrate importer 2 (CUT2) (TC 3.A.1.2) family.

It localises to the cell inner membrane. The catalysed reaction is D-ribose(out) + ATP + H2O = D-ribose(in) + ADP + phosphate + H(+). The enzyme catalyses D-galactose(out) + ATP + H2O = D-galactose(in) + ADP + phosphate + H(+). In terms of biological role, part of an ABC transporter complex involved in carbohydrate import. Could be involved in ribose, galactose and/or methyl galactoside import. Responsible for energy coupling to the transport system. In Agrobacterium fabrum (strain C58 / ATCC 33970) (Agrobacterium tumefaciens (strain C58)), this protein is Putative ribose/galactose/methyl galactoside import ATP-binding protein 1.